The sequence spans 178 residues: Anthranilate synthase component 2 (178 aa).

Residues 1–178 enclose the Glutamine amidotransferase type-1 domain; sequence MIVVVDCKDS…RNFVEMCHDG (178 aa). 49–51 provides a ligand contact to L-glutamine; sequence GPG. The active-site Nucleophile; for GATase activity is the C71. L-glutamine contacts are provided by residues Q75 and 120-121; that span reads SL. Active-site for GATase activity residues include H155 and E157.

Heterotetramer consisting of two non-identical subunits: a beta subunit (TrpG) and a large alpha subunit (TrpE).

The catalysed reaction is chorismate + L-glutamine = anthranilate + pyruvate + L-glutamate + H(+). The protein operates within amino-acid biosynthesis; L-tryptophan biosynthesis; L-tryptophan from chorismate: step 1/5. Part of a heterotetrameric complex that catalyzes the two-step biosynthesis of anthranilate, an intermediate in the biosynthesis of L-tryptophan. In the first step, the glutamine-binding beta subunit (TrpG) of anthranilate synthase (AS) provides the glutamine amidotransferase activity which generates ammonia as a substrate that, along with chorismate, is used in the second step, catalyzed by the large alpha subunit of AS (TrpE) to produce anthranilate. In the absence of TrpG, TrpE can synthesize anthranilate directly from chorismate and high concentrations of ammonia. In Archaeoglobus fulgidus (strain ATCC 49558 / DSM 4304 / JCM 9628 / NBRC 100126 / VC-16), this protein is Anthranilate synthase component 2 (trpG).